Consider the following 764-residue polypeptide: A-type ATP synthase subunit A (764 aa).

This sequence belongs to the ATPase alpha/beta chains family. As to quaternary structure, has multiple subunits with at least A(3), B(3), C, D, E, F, H, I and proteolipid K(x). This protein undergoes a protein self splicing that involves a post-translational excision of the VDE intervening region (intein) followed by peptide ligation.

It localises to the cell membrane. It catalyses the reaction ATP + H2O + 4 H(+)(in) = ADP + phosphate + 5 H(+)(out). Functionally, component of the A-type ATP synthase that produces ATP from ADP in the presence of a proton gradient across the membrane. The A chain is the catalytic subunit. The sequence is that of A-type ATP synthase subunit A from Thermoplasma acidophilum (strain ATCC 25905 / DSM 1728 / JCM 9062 / NBRC 15155 / AMRC-C165).